The primary structure comprises 883 residues: QMSYVDHSKSSGPPQPGPMGPMGPRGPPGPPGSSGPQGFTGPPGEPGEPGASGAMGSRGPSGPPGKNGDDGEPGKGAAGPQGARGFSGLDGAKGDAGPAGPKGESGAPGENGVPGVMGARGRPGPPGPSGARGNDGNTGPXGPPGPTGGETGPAGGRGNEGPQGARGEPGNPGPAGPAGPAGSPGTDGGPGAKGSPGAAGLAGAPGFPGGPAGAQGAVGAPGPKGNSGDPGASGPKGEPGAKGEPGPAGVQGLPGPSGEEGKRGARGEPGGAGPRGPPGERGFPGADGGAGGKGAPGERGAPGSLGAQGATGESGSPGAPGAPGSKGVTGSPGSPGPDGKTGPAGVAGQDGRPGPPGSAGARGQPGVMGFPGPKGPAGESGKPGERDGDVGAPGPSGVAGPAGEKGDRGFPGERGAPGLGGPTGARGAPGPAGNDGAKGEPGAAGAPGGLGAPGMQGMPGERGASGLPGAKGERGDAGGKGGDGAPGKDGSRGMTGALGVPGPPGAQGEKVAGPTGPRGETGPPGPAGFAGPPGADGQPGAKGETGDSGPKGDAGPQGPAGPTGPKGGAGPPGATGFPGPAGRVGPPGPAGAAGPPGPVGPVGKGETGXAGRPGPQGLAGQRGLVGLPGQRGERGFSGLPGPSGEPGKQGASGPVGERGPPGPSGPPGLSGATGEAGREGSQGHDGAPGRDGSAGPKGDRGESGMAGPPGPPGAPGAPGAVGPSGKSGDRGETGPAGPAGPSGPAGVRGPAGPAGAKGDRGEAGEAGDRGHKGFTGMQGLPGPAGVHGERGPAGASGPAGPRGPAGSNGAPGKDNGEMGPAGPPGPPGPAGPPGPPGSGFDFVSQPLQEKAPDPFRGGHYLRSPDGTQKKALLLGGSNDVELR.

The tract at residues 1–883 (QMSYVDHSKS…LGGSNDVELR (883 aa)) is disordered. A compositionally biased stretch (pro residues) spans 13-33 (PPQPGPMGPMGPRGPPGPPGS). Low complexity-rich tracts occupy residues 34-57 (SGPQ…AMGS), 113-122 (VPGVMGARGR), and 129-140 (SGARGNDGNTGP). Gly residues-rich tracts occupy residues 147–161 (TGGE…GNEG) and 185–194 (GTDGGPGAKG). Composition is skewed to low complexity over residues 195–205 (SPGAAGLAGAP), 214–223 (AQGAVGAPGP), and 230–248 (PGAS…PGPA). A compositionally biased stretch (gly residues) spans 285-297 (GADGGAGGKGAPG). 2 stretches are compositionally biased toward low complexity: residues 310 to 326 (ATGE…PGSK) and 390 to 402 (VGAP…AGPA). Residues 415–424 (GAPGLGGPTG) show a composition bias toward gly residues. Residues 425-444 (ARGAPGPAGNDGAKGEPGAA) show a composition bias toward low complexity. Composition is skewed to gly residues over residues 445 to 454 (GAPGGLGAPG) and 478 to 487 (GGKGGDGAPG). The span at 512 to 542 (AGPTGPRGETGPPGPAGFAGPPGADGQPGAK) shows a compositional bias: low complexity. The segment covering 564–573 (GPKGGAGPPG) has biased composition (gly residues). Composition is skewed to low complexity over residues 574-584 (ATGFPGPAGRV), 717-726 (APGAVGPSGK), and 742-756 (SGPA…PAGA). The span at 757 to 771 (KGDRGEAGEAGDRGH) shows a compositional bias: basic and acidic residues. Over residues 792–812 (PAGASGPAGPRGPAGSNGAPG) the composition is skewed to low complexity. The segment covering 821-836 (AGPPGPPGPAGPPGPP) has biased composition (pro residues).

It belongs to the fibrillar collagen family.

In Epinephelus costae (Goldblotch grouper), this protein is Collagen, type I, alpha 1b.